A 240-amino-acid chain; its full sequence is Probable transcriptional regulatory protein A2cp1_1765 (240 aa).

It belongs to the TACO1 family.

The protein localises to the cytoplasm. The polypeptide is Probable transcriptional regulatory protein A2cp1_1765 (Anaeromyxobacter dehalogenans (strain 2CP-1 / ATCC BAA-258)).